Consider the following 130-residue polypeptide: Riboflavin kinase (130 aa).

12–17 (GLGVGA) is a CDP binding site. Mg(2+) is bound by residues threonine 39 and asparagine 41. 2 residues coordinate FMN: threonine 90 and glutamate 98. Residue 103–106 (KNLR) participates in CDP binding.

This sequence belongs to the archaeal riboflavin kinase family. Mg(2+) is required as a cofactor.

It catalyses the reaction riboflavin + CTP = CDP + FMN + H(+). The protein operates within cofactor biosynthesis; FMN biosynthesis; FMN from riboflavin (CTP route): step 1/1. In terms of biological role, catalyzes the CTP-dependent phosphorylation of riboflavin (vitamin B2) to form flavin mononucleotide (FMN). The protein is Riboflavin kinase of Staphylothermus marinus (strain ATCC 43588 / DSM 3639 / JCM 9404 / F1).